Reading from the N-terminus, the 1312-residue chain is Retinoblastoma-like protein A (1312 aa).

7 disordered regions span residues 1–67 (MMAH…NNEN), 168–231 (SSSS…KNSS), 336–359 (HNYNNNSNNNNNNNNNNNNNNNNN), 536–611 (NNNN…IYGT), 987–1023 (NNNNNNNNNNNNNNNNNNNNNNINNNNNNNENNNNNN), 1168–1236 (KKND…NNTE), and 1249–1312 (EESP…RLKS). The segment covering 10–67 (TNINTKTTAPTTTTTEQQPEQQQQQPEQQQQEKQNNNNNNNNNNNNNNNINNNENNEN) has biased composition (low complexity). A coiled-coil region spans residues 36-117 (EQQQQEKQNN…TSSALNVDQD (82 aa)). Residues 168–179 (SSSSFQPDNNSK) show a composition bias toward polar residues. Over residues 180-189 (IKGRKIRKTN) the composition is skewed to basic residues. Positions 195–230 (NNDSNEEEEETTTDTEEEEEEDTLLNENNNSINKNS) form a coiled coil. A compositionally biased stretch (acidic residues) spans 198 to 218 (SNEEEEETTTDTEEEEEEDTL). 3 stretches are compositionally biased toward low complexity: residues 219–231 (LNENNNSINKNSS), 337–359 (NYNNNSNNNNNNNNNNNNNNNNN), and 536–595 (NNNN…SSSS). Low complexity-rich tracts occupy residues 1185–1234 (NNNN…NNNN), 1251–1275 (SPSTPSSSSSPTILNNNKKNNNNNK), and 1286–1305 (SPSSSPLSSSSSSSSSSSSG).

This sequence belongs to the retinoblastoma protein (RB) family.

Its subcellular location is the nucleus. Key regulator of entry into cell division. Directly involved in heterochromatin formation by maintaining overall chromatin structure and, in particular, that of constitutive heterochromatin by stabilizing histone methylation. Controls histone H4 'Lys-20' trimethylation. Probably acts as a transcription repressor by recruiting chromatin-modifying enzymes to promoters. Plays a dual role, regulating cell-cycle progression and transcriptional events leading to terminal differentiation. In the absence of a G1 phase, functions in late G2 controlling the expression of both S-phase and mitotic genes. Controls stalk/spore preference by suppressing the DIF response in cells destined for the spore pathway. DIF is a chlorinated hydroxyphenone made by cells of spore pathway that promotes stalk differentiation. The protein is Retinoblastoma-like protein A of Dictyostelium discoideum (Social amoeba).